The following is a 181-amino-acid chain: UPF0302 protein ABC1905 (181 aa).

Belongs to the UPF0302 family.

The sequence is that of UPF0302 protein ABC1905 from Shouchella clausii (strain KSM-K16) (Alkalihalobacillus clausii).